Reading from the N-terminus, the 780-residue chain is Acyl-CoA dehydrogenase family member 11 (780 aa).

Residue lysine 177 is modified to N6-acetyllysine. Tyrosine 324 is subject to Phosphotyrosine. Lysine 391 is modified (N6-succinyllysine). FAD contacts are provided by residues 504–514 and 538–540; these read FCMTEPDVASS and WSS. Serine 514 contributes to the substrate binding site. 629–632 is a binding site for substrate; the sequence is GPGR. FAD-binding positions include arginine 657, glutamine 727, and 727-731; that span reads QVCGG. Position 755 (glycine 755) interacts with substrate. Residue 756 to 758 coordinates FAD; that stretch reads PDE.

It belongs to the acyl-CoA dehydrogenase family. Homodimer. Requires FAD as cofactor. In terms of tissue distribution, widely expressed with highest levels in brain followed by liver, heart and kidney.

The protein localises to the peroxisome. Its subcellular location is the mitochondrion membrane. It catalyses the reaction a 2,3-saturated acyl-CoA + oxidized [electron-transfer flavoprotein] + H(+) = a (2E)-enoyl-CoA + reduced [electron-transfer flavoprotein]. The catalysed reaction is docosanoyl-CoA + oxidized [electron-transfer flavoprotein] + H(+) = (2E)-docosenoyl-CoA + reduced [electron-transfer flavoprotein]. It carries out the reaction tetracosanoyl-CoA + oxidized [electron-transfer flavoprotein] + H(+) = (2E)-tetracosenoyl-CoA + reduced [electron-transfer flavoprotein]. The enzyme catalyses eicosanoyl-CoA + oxidized [electron-transfer flavoprotein] + H(+) = (2E)-eicosenoyl-CoA + reduced [electron-transfer flavoprotein]. It catalyses the reaction hexacosanoyl-CoA + oxidized [electron-transfer flavoprotein] + H(+) = (2E)-hexacosenoyl-CoA + reduced [electron-transfer flavoprotein]. The catalysed reaction is tricosanoyl-CoA + oxidized [electron-transfer flavoprotein] + H(+) = (2E)-tricosenoyl-CoA + reduced [electron-transfer flavoprotein]. It functions in the pathway lipid metabolism; fatty acid beta-oxidation. Acyl-CoA dehydrogenase, that exhibits maximal activity towards saturated C22-CoA. Probably participates in beta-oxydation and energy production but could also play a role in the metabolism of specific fatty acids to control fatty acids composition of cellular lipids in brain. This Homo sapiens (Human) protein is Acyl-CoA dehydrogenase family member 11 (ACAD11).